Consider the following 270-residue polypeptide: tRNA pseudouridine synthase A (270 aa).

Asp51 (nucleophile) is an active-site residue. Tyr109 contributes to the substrate binding site.

The protein belongs to the tRNA pseudouridine synthase TruA family. As to quaternary structure, homodimer.

It catalyses the reaction uridine(38/39/40) in tRNA = pseudouridine(38/39/40) in tRNA. Formation of pseudouridine at positions 38, 39 and 40 in the anticodon stem and loop of transfer RNAs. In Burkholderia mallei (strain ATCC 23344), this protein is tRNA pseudouridine synthase A.